Reading from the N-terminus, the 150-residue chain is UPF0178 protein Bcep18194_A4809 (150 aa).

The protein belongs to the UPF0178 family.

The chain is UPF0178 protein Bcep18194_A4809 from Burkholderia lata (strain ATCC 17760 / DSM 23089 / LMG 22485 / NCIMB 9086 / R18194 / 383).